The chain runs to 830 residues: DNA gyrase subunit A (830 aa).

One can recognise a Topo IIA-type catalytic domain in the interval 34–514; sequence LPDVRDGLKP…NHSDINMEDL (481 aa). Y122 functions as the O-(5'-phospho-DNA)-tyrosine intermediate in the catalytic mechanism. Positions 541–547 match the GyrA-box motif; sequence QRRGGKG.

Belongs to the type II topoisomerase GyrA/ParC subunit family. As to quaternary structure, heterotetramer, composed of two GyrA and two GyrB chains. In the heterotetramer, GyrA contains the active site tyrosine that forms a transient covalent intermediate with DNA, while GyrB binds cofactors and catalyzes ATP hydrolysis.

It is found in the cytoplasm. The enzyme catalyses ATP-dependent breakage, passage and rejoining of double-stranded DNA.. Its function is as follows. A type II topoisomerase that negatively supercoils closed circular double-stranded (ds) DNA in an ATP-dependent manner to modulate DNA topology and maintain chromosomes in an underwound state. Negative supercoiling favors strand separation, and DNA replication, transcription, recombination and repair, all of which involve strand separation. Also able to catalyze the interconversion of other topological isomers of dsDNA rings, including catenanes and knotted rings. Type II topoisomerases break and join 2 DNA strands simultaneously in an ATP-dependent manner. The polypeptide is DNA gyrase subunit A (Buchnera aphidicola subsp. Acyrthosiphon pisum (strain APS) (Acyrthosiphon pisum symbiotic bacterium)).